We begin with the raw amino-acid sequence, 75 residues long: DNA-directed RNA polymerase subunit omega (75 aa).

This sequence belongs to the RNA polymerase subunit omega family. As to quaternary structure, in cyanobacteria the RNAP catalytic core is composed of 2 alpha, 1 beta, 1 beta', 1 gamma and 1 omega subunit. When a sigma factor is associated with the core the holoenzyme is formed, which can initiate transcription.

The enzyme catalyses RNA(n) + a ribonucleoside 5'-triphosphate = RNA(n+1) + diphosphate. Functionally, promotes RNA polymerase assembly. Latches the N- and C-terminal regions of the beta' subunit thereby facilitating its interaction with the beta and alpha subunits. This is DNA-directed RNA polymerase subunit omega from Microcystis aeruginosa (strain NIES-843 / IAM M-2473).